Reading from the N-terminus, the 242-residue chain is Segregation and condensation protein A (242 aa).

It belongs to the ScpA family. As to quaternary structure, component of a cohesin-like complex composed of ScpA, ScpB and the Smc homodimer, in which ScpA and ScpB bind to the head domain of Smc. The presence of the three proteins is required for the association of the complex with DNA.

It localises to the cytoplasm. Its function is as follows. Participates in chromosomal partition during cell division. May act via the formation of a condensin-like complex containing Smc and ScpB that pull DNA away from mid-cell into both cell halves. This is Segregation and condensation protein A from Streptococcus mitis.